We begin with the raw amino-acid sequence, 210 residues long: MSKQNRGRLIVIEGLDRSGKSTQCQLLVDKLISQHEKAELFKFPDRTTAIGKKIDDYLKESVQLNDQVIHLLFSANRWETIQYIYEQINKGVTCILDRYAFSGIAFSAAKGLDWEWCKSPDRGLPRPDLVIFLNVDPRIAATRGQYGEERYEKIEMQEKVLKNFQRLQKEFREEGLEFITLDASSSLEDVHSQIVDLVSNVNIHETLDVL.

14–21 (GLDRSGKS) contacts ATP.

Belongs to the thymidylate kinase family.

It catalyses the reaction dTMP + ATP = dTDP + ADP. It functions in the pathway pyrimidine metabolism; dTTP biosynthesis. Catalyzes the conversion of dTMP to dTDP. In Schizosaccharomyces pombe (strain 972 / ATCC 24843) (Fission yeast), this protein is Thymidylate kinase (tmp1).